Reading from the N-terminus, the 220-residue chain is Deoxyribose-phosphate aldolase (220 aa).

Catalysis depends on Asp89, which acts as the Proton donor/acceptor. Lys151 functions as the Schiff-base intermediate with acetaldehyde in the catalytic mechanism. Lys180 acts as the Proton donor/acceptor in catalysis.

This sequence belongs to the DeoC/FbaB aldolase family. DeoC type 1 subfamily.

It localises to the cytoplasm. The enzyme catalyses 2-deoxy-D-ribose 5-phosphate = D-glyceraldehyde 3-phosphate + acetaldehyde. It participates in carbohydrate degradation; 2-deoxy-D-ribose 1-phosphate degradation; D-glyceraldehyde 3-phosphate and acetaldehyde from 2-deoxy-alpha-D-ribose 1-phosphate: step 2/2. Functionally, catalyzes a reversible aldol reaction between acetaldehyde and D-glyceraldehyde 3-phosphate to generate 2-deoxy-D-ribose 5-phosphate. In Streptococcus uberis (strain ATCC BAA-854 / 0140J), this protein is Deoxyribose-phosphate aldolase.